Here is a 63-residue protein sequence, read N- to C-terminus: Large ribosomal subunit protein uL29 (63 aa).

It belongs to the universal ribosomal protein uL29 family.

The polypeptide is Large ribosomal subunit protein uL29 (Tolumonas auensis (strain DSM 9187 / NBRC 110442 / TA 4)).